Consider the following 211-residue polypeptide: Uridine kinase (211 aa).

15 to 22 (GGSGSGKT) is a binding site for ATP.

It belongs to the uridine kinase family.

The protein resides in the cytoplasm. It carries out the reaction uridine + ATP = UMP + ADP + H(+). It catalyses the reaction cytidine + ATP = CMP + ADP + H(+). Its pathway is pyrimidine metabolism; CTP biosynthesis via salvage pathway; CTP from cytidine: step 1/3. It participates in pyrimidine metabolism; UMP biosynthesis via salvage pathway; UMP from uridine: step 1/1. This is Uridine kinase from Latilactobacillus sakei subsp. sakei (strain 23K) (Lactobacillus sakei subsp. sakei).